Reading from the N-terminus, the 453-residue chain is Ribosomal protein uS12 methylthiotransferase RimO (453 aa).

The region spanning 5-120 (PKVGFVSLGC…VMQAVHSHLP (116 aa)) is the MTTase N-terminal domain. 6 residues coordinate [4Fe-4S] cluster: Cys14, Cys50, Cys79, Cys151, Cys155, and Cys158. Positions 137-382 (LTPRHYAYLK…MEVAEEVSAR (246 aa)) constitute a Radical SAM core domain. In terms of domain architecture, TRAM spans 385–453 (QRKVGKTLKV…ADGHDLWGEV (69 aa)).

This sequence belongs to the methylthiotransferase family. RimO subfamily. [4Fe-4S] cluster is required as a cofactor.

It is found in the cytoplasm. The catalysed reaction is L-aspartate(89)-[ribosomal protein uS12]-hydrogen + (sulfur carrier)-SH + AH2 + 2 S-adenosyl-L-methionine = 3-methylsulfanyl-L-aspartate(89)-[ribosomal protein uS12]-hydrogen + (sulfur carrier)-H + 5'-deoxyadenosine + L-methionine + A + S-adenosyl-L-homocysteine + 2 H(+). Functionally, catalyzes the methylthiolation of an aspartic acid residue of ribosomal protein uS12. This chain is Ribosomal protein uS12 methylthiotransferase RimO, found in Burkholderia vietnamiensis (strain G4 / LMG 22486) (Burkholderia cepacia (strain R1808)).